Here is a 456-residue protein sequence, read N- to C-terminus: tRNA modification GTPase MnmE (456 aa).

R24, E81, and K120 together coordinate (6S)-5-formyl-5,6,7,8-tetrahydrofolate. Residues 216 to 379 (GMTVVIAGRP…LRDHLKACMG (164 aa)) enclose the TrmE-type G domain. Residue N226 coordinates K(+). GTP is bound by residues 226–231 (NAGKSS), 245–251 (TDIAGTT), 270–273 (DTAG), and 335–338 (NKAD). S230 contributes to the Mg(2+) binding site. K(+)-binding residues include T245, I247, and T250. Mg(2+) is bound at residue T251. K456 contributes to the (6S)-5-formyl-5,6,7,8-tetrahydrofolate binding site.

This sequence belongs to the TRAFAC class TrmE-Era-EngA-EngB-Septin-like GTPase superfamily. TrmE GTPase family. In terms of assembly, homodimer. Heterotetramer of two MnmE and two MnmG subunits. Requires K(+) as cofactor.

It is found in the cytoplasm. Functionally, exhibits a very high intrinsic GTPase hydrolysis rate. Involved in the addition of a carboxymethylaminomethyl (cmnm) group at the wobble position (U34) of certain tRNAs, forming tRNA-cmnm(5)s(2)U34. This is tRNA modification GTPase MnmE from Pseudomonas fluorescens (strain ATCC BAA-477 / NRRL B-23932 / Pf-5).